The primary structure comprises 209 residues: Uracil phosphoribosyltransferase (209 aa).

5-phospho-alpha-D-ribose 1-diphosphate-binding positions include arginine 79, arginine 104, and 131–139 (DPMLATGNS). Uracil-binding positions include isoleucine 194 and 199 to 201 (GDA). Residue aspartate 200 participates in 5-phospho-alpha-D-ribose 1-diphosphate binding.

It belongs to the UPRTase family. Mg(2+) serves as cofactor.

The enzyme catalyses UMP + diphosphate = 5-phospho-alpha-D-ribose 1-diphosphate + uracil. It participates in pyrimidine metabolism; UMP biosynthesis via salvage pathway; UMP from uracil: step 1/1. Allosterically activated by GTP. In terms of biological role, catalyzes the conversion of uracil and 5-phospho-alpha-D-ribose 1-diphosphate (PRPP) to UMP and diphosphate. This is Uracil phosphoribosyltransferase from Rhizobium meliloti (strain 1021) (Ensifer meliloti).